The sequence spans 146 residues: Deoxyuridine 5'-triphosphate nucleotidohydrolase (146 aa).

Substrate-binding positions include 66–68 (RSG), Asn79, 83–85 (TID), and Lys93.

The protein belongs to the dUTPase family. Mg(2+) serves as cofactor.

The catalysed reaction is dUTP + H2O = dUMP + diphosphate + H(+). Its pathway is pyrimidine metabolism; dUMP biosynthesis; dUMP from dCTP (dUTP route): step 2/2. This enzyme is involved in nucleotide metabolism: it produces dUMP, the immediate precursor of thymidine nucleotides and it decreases the intracellular concentration of dUTP so that uracil cannot be incorporated into DNA. The sequence is that of Deoxyuridine 5'-triphosphate nucleotidohydrolase from Zymomonas mobilis subsp. mobilis (strain ATCC 31821 / ZM4 / CP4).